We begin with the raw amino-acid sequence, 51 residues long: MREKIKLESSAGTGHFYTTTKNKRTTPEKIEITKFDPVARKHVKYKETKLK.

The protein belongs to the bacterial ribosomal protein bL33 family.

This Nitrosospira multiformis (strain ATCC 25196 / NCIMB 11849 / C 71) protein is Large ribosomal subunit protein bL33.